Consider the following 412-residue polypeptide: Phosphoribosylamine--glycine ligase (412 aa).

One can recognise an ATP-grasp domain in the interval 108 to 309 (KSIMKKYGVP…LAQAIIDILA (202 aa)). 134–190 (LDEKGVPLVIKADGLAAGKGVTVAFDIETAKSALADIFSGSQGKVVIEEFLDGEEFS) is an ATP binding site. Mg(2+)-binding residues include glutamate 279 and asparagine 281.

The protein belongs to the GARS family. The cofactor is Mg(2+). Mn(2+) is required as a cofactor.

It carries out the reaction 5-phospho-beta-D-ribosylamine + glycine + ATP = N(1)-(5-phospho-beta-D-ribosyl)glycinamide + ADP + phosphate + H(+). It participates in purine metabolism; IMP biosynthesis via de novo pathway; N(1)-(5-phospho-D-ribosyl)glycinamide from 5-phospho-alpha-D-ribose 1-diphosphate: step 2/2. This chain is Phosphoribosylamine--glycine ligase, found in Lactococcus lactis subsp. lactis (strain IL1403) (Streptococcus lactis).